The primary structure comprises 1125 residues: Phytochrome A (1125 aa).

2 stretches are compositionally biased toward low complexity: residues 1 to 14 (MSSSRPSHSSSNSA) and 39 to 48 (SGSSFDYSSS). Disordered regions lie at residues 1–22 (MSSSRPSHSSSNSARSRHSARI) and 38–64 (ESGSSFDYSSSVRVTDSVGGDQPPRSD). A GAF domain is found at 218–401 (SMERLCDTMV…VFAIHVNKEL (184 aa)). Cys-323 lines the phytochromobilin pocket. PAS domains follow at residues 617–687 (VTSE…LQGK) and 750–821 (DYKA…VNLG). A Histidine kinase domain is found at 901–1117 (YLKKQIWNPL…SFIISVELAG (217 aa)).

The protein belongs to the phytochrome family. In terms of assembly, homodimer. Post-translationally, contains one covalently linked phytochromobilin chromophore.

In terms of biological role, regulatory photoreceptor which exists in two forms that are reversibly interconvertible by light: the Pr form that absorbs maximally in the red region of the spectrum and the Pfr form that absorbs maximally in the far-red region. Photoconversion of Pr to Pfr induces an array of morphogenic responses, whereas reconversion of Pfr to Pr cancels the induction of those responses. Pfr controls the expression of a number of nuclear genes including those encoding the small subunit of ribulose-bisphosphate carboxylase, chlorophyll A/B binding protein, protochlorophyllide reductase, rRNA, etc. It also controls the expression of its own gene(s) in a negative feedback fashion. This chain is Phytochrome A (PHYA), found in Populus tremuloides (Quaking aspen).